A 253-amino-acid chain; its full sequence is Imidazole glycerol phosphate synthase subunit HisF (253 aa).

Catalysis depends on residues D13 and D132.

This sequence belongs to the HisA/HisF family. In terms of assembly, heterodimer of HisH and HisF.

The protein resides in the cytoplasm. It catalyses the reaction 5-[(5-phospho-1-deoxy-D-ribulos-1-ylimino)methylamino]-1-(5-phospho-beta-D-ribosyl)imidazole-4-carboxamide + L-glutamine = D-erythro-1-(imidazol-4-yl)glycerol 3-phosphate + 5-amino-1-(5-phospho-beta-D-ribosyl)imidazole-4-carboxamide + L-glutamate + H(+). It functions in the pathway amino-acid biosynthesis; L-histidine biosynthesis; L-histidine from 5-phospho-alpha-D-ribose 1-diphosphate: step 5/9. In terms of biological role, IGPS catalyzes the conversion of PRFAR and glutamine to IGP, AICAR and glutamate. The HisF subunit catalyzes the cyclization activity that produces IGP and AICAR from PRFAR using the ammonia provided by the HisH subunit. The protein is Imidazole glycerol phosphate synthase subunit HisF of Aliarcobacter butzleri (strain RM4018) (Arcobacter butzleri).